A 402-amino-acid chain; its full sequence is MLLAALLAALVARTTLGADVDAVPAPTFPPPAYPYTESWQLTLTTVPSPFVGPADVYHTRPLEDPCGVVALISDPQVDRLLNEAVAHRRPTYRAHVAWYRIADGCAHLLYFIEYADCDPRQVFGRCRRRTTPMWWTPSADYMFPTEDELGLLMVAPGRFNEGQYRRLVSVDGVNILTDFMVALPEGQECPFARVDQHRTYKFGACWSDDSFKRGVDVMRFLTPFYQQPPHREVVNYWYRKNGRTLPRAHAAATPYAIDPARPSAGSPRPRPRPRPRPRPKPEPAPATPAPPDRLPEPATRDHAAGGRPTPRPPRPETPHRPFAPPAVVPSGWPQPAEPFQPRTPAAPGVSRHRSVIVGTGTAMGALLVGVCVYIFFRLRGAKGYRLLGGPADADELKAQPGP.

An N-terminal signal peptide occupies residues 1–17 (MLLAALLAALVARTTLG). 3 disulfides stabilise this stretch: cysteine 66–cysteine 189, cysteine 105–cysteine 205, and cysteine 117–cysteine 126. The interval 238-316 (YRKNGRTLPR…RPTPRPPRPE (79 aa)) is profusion. Positions 252–350 (ATPYAIDPAR…PRTPAAPGVS (99 aa)) are disordered. Basic residues predominate over residues 269 to 278 (PRPRPRPRPR). Pro residues predominate over residues 282–292 (EPAPATPAPPD). A compositionally biased stretch (basic and acidic residues) spans 293 to 304 (RLPEPATRDHAA). Residues 356–376 (IVGTGTAMGALLVGVCVYIFF) form a helical membrane-spanning segment.

The protein belongs to the herpesviridae glycoprotein D family. Post-translationally, not N-glycosylated.

It localises to the virion membrane. Its function is as follows. Envelope glycoprotein that binds to the host cell entry receptor NECTIN1, promoting the virus entry into host cells. In contrast, does not use host TNFRSF14 as receptor. May trigger fusion with host membrane, by recruiting the fusion machinery composed of gB and gH/gL. The chain is Envelope glycoprotein D from Suid herpesvirus 1 (strain Rice) (SuHV-1).